The following is a 229-amino-acid chain: MVKEMKETINIFNTKTTEEVAQYLLGMYLEHETATGVLGGYIVDAEAYLGPDDEAAHSFGLRKTPRLQAMYDKPGTIYLYTMHTHLILNMVTQEQGKPQGVMIRAIEPVEGVDKMIENRQGRQGVELTNGPGKLVAALGIDKQLYGQSIFSSSLRLVPEKRKFPKKIEALPRIGIPNKGRWTELPLRYVVAGNPYISKQKRTAVDQIDFGWKDEENEKSNNAHILRGTT.

This sequence belongs to the DNA glycosylase MPG family.

The polypeptide is Putative 3-methyladenine DNA glycosylase (Enterococcus faecalis (strain ATCC 700802 / V583)).